The sequence spans 368 residues: Mitogen-activated protein kinase 7 (368 aa).

A Protein kinase domain is found at 32–319; the sequence is YVPIKPIGRG…VTDALLHPYM (288 aa). Residues 38-46 and lysine 61 each bind ATP; that span reads IGRGAYGVV. Aspartate 158 serves as the catalytic Proton acceptor. At threonine 191 the chain carries Phosphothreonine. The short motif at 191 to 193 is the TXY element; sequence TEY. At tyrosine 193 the chain carries Phosphotyrosine. A Phosphothreonine modification is found at threonine 196.

This sequence belongs to the protein kinase superfamily. CMGC Ser/Thr protein kinase family. MAP kinase subfamily. Interacts with MKK3. It depends on Mg(2+) as a cofactor. In terms of processing, dually phosphorylated on Thr-191 and Tyr-193, which activates the enzyme.

The enzyme catalyses L-seryl-[protein] + ATP = O-phospho-L-seryl-[protein] + ADP + H(+). The catalysed reaction is L-threonyl-[protein] + ATP = O-phospho-L-threonyl-[protein] + ADP + H(+). With respect to regulation, activated by threonine and tyrosine phosphorylation. Activated in response to hydrogen peroxide. Activation is triggered by MAPKKK17 and MAPKKK18 in a MKK3-dependent manner. In terms of biological role, MKK3-MPK7 module acts as a positive regulator of PR1 gene expression. This is Mitogen-activated protein kinase 7 (MPK7) from Arabidopsis thaliana (Mouse-ear cress).